We begin with the raw amino-acid sequence, 24 residues long: Brevinin-1Pd (24 aa).

An intrachain disulfide couples Cys18 to Cys24.

In terms of tissue distribution, expressed by the skin glands.

It localises to the secreted. Antibacterial activity against Gram-positive bacterium S.aureus and Gram-negative bacterium E.coli. Has activity against C.albicans. This is Brevinin-1Pd from Lithobates pipiens (Northern leopard frog).